Consider the following 234-residue polypeptide: Urease subunit alpha (234 aa).

The tract at residues 1 to 102 is urease gamma; it reads MKLTPKELDK…LVTIHTPVEA (102 aa). The urease beta stretch occupies residues 103–234; sequence GSDKLAPGEV…GTINCGCDNK (132 aa).

In the N-terminal section; belongs to the urease gamma subunit family. This sequence in the C-terminal section; belongs to the urease beta subunit family. As to quaternary structure, heterohexamer of 3 UreA (alpha) and 3 UreB (beta) subunits.

Its subcellular location is the cytoplasm. The enzyme catalyses urea + 2 H2O + H(+) = hydrogencarbonate + 2 NH4(+). It functions in the pathway nitrogen metabolism; urea degradation; CO(2) and NH(3) from urea (urease route): step 1/1. This Helicobacter heilmannii protein is Urease subunit alpha.